Reading from the N-terminus, the 100-residue chain is uncharacterized protein (100 aa).

2 helical membrane-spanning segments follow: residues 17–37 and 78–98; these read IIIL…SVSF and MVDK…TIPF.

The protein resides in the endoplasmic reticulum membrane. This is an uncharacterized protein from Saccharomyces cerevisiae (strain ATCC 204508 / S288c) (Baker's yeast).